Reading from the N-terminus, the 399-residue chain is Methylthioribose kinase (399 aa).

ATP is bound by residues N40, K57, and 111–113 (EDL). Residue D229 participates in substrate binding. 246-248 (DAE) provides a ligand contact to ATP. Residue R344 participates in substrate binding.

The protein belongs to the methylthioribose kinase family. As to quaternary structure, homodimer.

It carries out the reaction 5-(methylsulfanyl)-D-ribose + ATP = 5-(methylsulfanyl)-alpha-D-ribose 1-phosphate + ADP + H(+). The protein operates within amino-acid biosynthesis; L-methionine biosynthesis via salvage pathway; S-methyl-5-thio-alpha-D-ribose 1-phosphate from S-methyl-5'-thioadenosine (hydrolase route): step 2/2. Its function is as follows. Catalyzes the phosphorylation of methylthioribose into methylthioribose-1-phosphate. In Cronobacter sakazakii (strain ATCC BAA-894) (Enterobacter sakazakii), this protein is Methylthioribose kinase.